Consider the following 519-residue polypeptide: AarF domain-containing protein kinase 1 (519 aa).

Residues 145-481 (SFEDTPLGAA…SLYRRVHISL (337 aa)) form the Protein kinase domain. ATP-binding positions include 151–159 (LGAASLAQV) and lysine 173. Catalysis depends on aspartate 305, which acts as the Proton acceptor.

Belongs to the protein kinase superfamily. ADCK protein kinase family.

The protein resides in the mitochondrion. In terms of biological role, appears to be essential for maintaining mitochondrial cristae formation and mitochondrial function by acting via YME1L1 in a kinase-independent manner to regulate essential mitochondrial structural proteins OPA1 and IMMT. The action of this enzyme is not yet clear. It is not known if it has protein kinase activity and what type of substrate it would phosphorylate (Ser, Thr or Tyr). The protein is AarF domain-containing protein kinase 1 (ADCK1) of Gallus gallus (Chicken).